The sequence spans 204 residues: Inner membrane-spanning protein YciB (204 aa).

The next 5 helical transmembrane spans lie at 48–68, 73–93, 102–122, 147–167, and 170–190; these read ILFA…LYFF, FESM…ATLM, WKPT…QLFT, GAWI…AYAF, and AVWV…FVVG.

The protein belongs to the YciB family.

The protein resides in the cell inner membrane. Functionally, plays a role in cell envelope biogenesis, maintenance of cell envelope integrity and membrane homeostasis. In Nitrosococcus oceani (strain ATCC 19707 / BCRC 17464 / JCM 30415 / NCIMB 11848 / C-107), this protein is Inner membrane-spanning protein YciB.